Consider the following 113-residue polypeptide: Large ribosomal subunit protein bL19 (113 aa).

This sequence belongs to the bacterial ribosomal protein bL19 family.

This protein is located at the 30S-50S ribosomal subunit interface and may play a role in the structure and function of the aminoacyl-tRNA binding site. The chain is Large ribosomal subunit protein bL19 from Corynebacterium diphtheriae (strain ATCC 700971 / NCTC 13129 / Biotype gravis).